The primary structure comprises 448 residues: Exodeoxyribonuclease 7 large subunit (448 aa).

This sequence belongs to the XseA family. In terms of assembly, heterooligomer composed of large and small subunits.

It localises to the cytoplasm. The enzyme catalyses Exonucleolytic cleavage in either 5'- to 3'- or 3'- to 5'-direction to yield nucleoside 5'-phosphates.. Its function is as follows. Bidirectionally degrades single-stranded DNA into large acid-insoluble oligonucleotides, which are then degraded further into small acid-soluble oligonucleotides. The sequence is that of Exodeoxyribonuclease 7 large subunit from Alcanivorax borkumensis (strain ATCC 700651 / DSM 11573 / NCIMB 13689 / SK2).